We begin with the raw amino-acid sequence, 106 residues long: ATP-dependent Clp protease adapter protein ClpS (106 aa).

The protein belongs to the ClpS family. As to quaternary structure, binds to the N-terminal domain of the chaperone ClpA.

Involved in the modulation of the specificity of the ClpAP-mediated ATP-dependent protein degradation. The protein is ATP-dependent Clp protease adapter protein ClpS of Nocardia farcinica (strain IFM 10152).